The following is a 594-amino-acid chain: Aspartate--tRNA(Asp/Asn) ligase (594 aa).

Glutamate 173 lines the L-aspartate pocket. The aspartate stretch occupies residues 197–200 (QLFK). Arginine 219 provides a ligand contact to L-aspartate. Residues 219-221 (RDE) and glutamine 228 contribute to the ATP site. An L-aspartate-binding site is contributed by histidine 449. An ATP-binding site is contributed by glutamate 482. Arginine 489 is an L-aspartate binding site. Residue 534–537 (GLDR) participates in ATP binding.

It belongs to the class-II aminoacyl-tRNA synthetase family. Type 1 subfamily. In terms of assembly, homodimer.

The protein localises to the cytoplasm. The enzyme catalyses tRNA(Asx) + L-aspartate + ATP = L-aspartyl-tRNA(Asx) + AMP + diphosphate. In terms of biological role, aspartyl-tRNA synthetase with relaxed tRNA specificity since it is able to aspartylate not only its cognate tRNA(Asp) but also tRNA(Asn). Reaction proceeds in two steps: L-aspartate is first activated by ATP to form Asp-AMP and then transferred to the acceptor end of tRNA(Asp/Asn). This is Aspartate--tRNA(Asp/Asn) ligase from Saccharophagus degradans (strain 2-40 / ATCC 43961 / DSM 17024).